A 471-amino-acid chain; its full sequence is ATP synthase subunit beta (471 aa).

153–160 (GGAGVGKT) contacts ATP.

The protein belongs to the ATPase alpha/beta chains family. In terms of assembly, F-type ATPases have 2 components, CF(1) - the catalytic core - and CF(0) - the membrane proton channel. CF(1) has five subunits: alpha(3), beta(3), gamma(1), delta(1), epsilon(1). CF(0) has four main subunits: a(1), b(1), b'(1) and c(9-12).

The protein localises to the cell membrane. It carries out the reaction ATP + H2O + 4 H(+)(in) = ADP + phosphate + 5 H(+)(out). Its function is as follows. Produces ATP from ADP in the presence of a proton gradient across the membrane. The catalytic sites are hosted primarily by the beta subunits. In Chloroflexus aggregans (strain MD-66 / DSM 9485), this protein is ATP synthase subunit beta.